Reading from the N-terminus, the 255-residue chain is MMVTARTPWGWFLGCLILEVTGASASSVSSRIIQGQDCSPHSQPWQAALFSEDGFFCSGVLVHPQWVLSAAHCLQESYIVGLGLHNLKGSQEPGSRMLEAHLSIQHPNFNDPSFANDLMLIKLNESVIESNTIRSIPVATQCPTPGDTCLVSGWGQLKNGKLPSLLQCVNLSVASEETCRLLYDPVYHLSMFCAGGGQDQKDSCNGDSGGPIVCNRSLQGLVSMGQGKCGQPGIPSVYTNLCKFTNWIQTIIQTN.

An N-terminal signal peptide occupies residues 1 to 25 (MMVTARTPWGWFLGCLILEVTGASA). The propeptide occupies 26 to 31 (SSVSSR). Residues 32–253 (IIQGQDCSPH…FTNWIQTIIQ (222 aa)) form the Peptidase S1 domain. Zn(2+) is bound at residue H41. A disulfide bond links C57 and C73. H72 (charge relay system) is an active-site residue. E92 serves as a coordination point for Zn(2+). The active-site Charge relay system is the D117. N-linked (GlcNAc...) asparagine glycosylation is found at N124 and N170. Cystine bridges form between C149–C214, C179–C193, and C204–C229. S208 (charge relay system) is an active-site residue.

This sequence belongs to the peptidase S1 family. Kallikrein subfamily. Post-translationally, N-glycosylated. The N-glycan structures are of complex diantennary or triantennary type, which may be further modified with up to 2 sialic acid residues.

The protein resides in the secreted. Functionally, has a major role in enamel formation. Required during the maturation stage of tooth development for clearance of enamel proteins and normal structural patterning of the crystalline matrix. This chain is Kallikrein-4, found in Mus musculus (Mouse).